The primary structure comprises 769 residues: Phenylalanine--tRNA ligase beta subunit (769 aa).

In terms of domain architecture, tRNA-binding spans 40 to 141 (GKLLTIARVA…GEPIPGCEPD (102 aa)). The B5 domain maps to 389-467 (PAPPPIELPL…RMIGYDSIAP (79 aa)). Aspartate 445, aspartate 451, glutamate 454, and glutamate 455 together coordinate Mg(2+). One can recognise an FDX-ACB domain in the interval 676–768 (RRYPSSAFDL…GMRAKGYELR (93 aa)).

Belongs to the phenylalanyl-tRNA synthetase beta subunit family. Type 1 subfamily. As to quaternary structure, tetramer of two alpha and two beta subunits. The cofactor is Mg(2+).

It is found in the cytoplasm. The catalysed reaction is tRNA(Phe) + L-phenylalanine + ATP = L-phenylalanyl-tRNA(Phe) + AMP + diphosphate + H(+). The sequence is that of Phenylalanine--tRNA ligase beta subunit from Solibacter usitatus (strain Ellin6076).